Reading from the N-terminus, the 137-residue chain is MRLYILVLAAIAVTLVFASSGPAITYHEVGTRALRQASITDEKSDDSLNAQAPPLSKSEKRLSRSFRTTSRRLPYTNYYHPQYYHPQNYHPHYNYPQYHSSPHVYVHQESKKSWFVRMILEAGIFWAVFHCLSAAFC.

Residues 1 to 18 (MRLYILVLAAIAVTLVFA) form the signal peptide. Positions 32–61 (RALRQASITDEKSDDSLNAQAPPLSKSEKR) match the RxLR-dEER motif. A disordered region spans residues 40 to 65 (TDEKSDDSLNAQAPPLSKSEKRLSRS). Residues 114–134 (WFVRMILEAGIFWAVFHCLSA) form a helical membrane-spanning segment.

The protein belongs to the RxLR effector family.

Its subcellular location is the secreted. The protein localises to the host cytoplasm. The protein resides in the host nucleus. It is found in the membrane. Effector that partially suppresses the tobacco programmed cell death induced by cell death-inducing proteins. In Plasmopara viticola (Downy mildew of grapevine), this protein is Secreted RxLR effector protein 67.